The sequence spans 199 residues: N-(5'-phosphoribosyl)anthranilate isomerase (199 aa).

This sequence belongs to the TrpF family.

The enzyme catalyses N-(5-phospho-beta-D-ribosyl)anthranilate = 1-(2-carboxyphenylamino)-1-deoxy-D-ribulose 5-phosphate. The protein operates within amino-acid biosynthesis; L-tryptophan biosynthesis; L-tryptophan from chorismate: step 3/5. The chain is N-(5'-phosphoribosyl)anthranilate isomerase from Clostridium kluyveri (strain NBRC 12016).